The chain runs to 904 residues: Envelope glycoprotein B (904 aa).

The N-terminal stretch at 1 to 30 (MHQGAPSWGRRWFVVWALLGLTLGVLVASA) is a signal peptide. The Virion surface portion of the chain corresponds to 31–774 (APTSPGTPGV…SGVSSFMSNP (744 aa)). A compositionally biased stretch (low complexity) spans 32–52 (PTSPGTPGVAAATQAANGGPA). The tract at residues 32–88 (PTSPGTPGVAAATQAANGGPATPAPPPLGAAPTGDPKPKKNKKPKNPTPPRPAGDNA) is disordered. 2 N-linked (GlcNAc...) asparagine; by host glycosylation sites follow: asparagine 87 and asparagine 141. Disulfide bonds link cysteine 116–cysteine 573, cysteine 133–cysteine 529, cysteine 207–cysteine 271, cysteine 364–cysteine 412, and cysteine 596–cysteine 633. Involved in fusion and/or binding to host membrane regions lie at residues 173–179 (VWFGHRY) and 258–265 (RVEAFHRY). Residues asparagine 398 and asparagine 430 are each glycosylated (N-linked (GlcNAc...) asparagine; by host). The tract at residues 470–492 (REQSRKPPNPTPPPPGASANASV) is disordered. Over residues 476 to 485 (PPNPTPPPPG) the composition is skewed to pro residues. Asparagine 489 carries an N-linked (GlcNAc...) asparagine; by host glycan. Residue asparagine 674 is glycosylated (N-linked (GlcNAc...) asparagine; by host). The segment at 719 to 772 (IDTVIHADANAAMFAGLGAFFEGMGDLGRAVGKVVMGIVGGVVSAVSGVSSFMS) is hydrophobic membrane proximal region. The chain crosses the membrane as a helical span at residues 775 to 795 (FGALAVGLLVLAGLAAAFFAF). Topologically, residues 796-904 (RYVMRLQSNP…KDGDADEDDL (109 aa)) are intravirion. Positions 849–852 (YMAL) match the Golgi targeting motif. The interval 883-904 (KRRNTNYTQVPNKDGDADEDDL) is disordered. Threonine 887 bears the Phosphothreonine; by host mark. Residues 889-892 (YTQV) carry the Internalization motif motif.

This sequence belongs to the herpesviridae glycoprotein B family. As to quaternary structure, homotrimer; disulfide-linked. Interacts with host receptor MYH9/NMMHC-IIA. Interacts with host receptor MYH10/NMMHC-IIB. Binds to heparan sulfate proteoglycans. Interacts with gH/gL heterodimer. Interacts with the host coreceptor PILRA. Post-translationally, the cytoplasmic tail is phosphorylated by the viral kinase US3. Phosphorylation may be linked to a down-regulation of gB expression on cell surface. In terms of processing, ubiquitinated.

The protein resides in the virion membrane. The protein localises to the host cell membrane. It is found in the host endosome membrane. Its subcellular location is the host Golgi apparatus membrane. Envelope glycoprotein that forms spikes at the surface of virion envelope and binds to the host cell entry receptors MYH9/NMMHC-IIA and MYH10/NMMHC-IIB, promoting the virus entry into host cells. Essential for the initial attachment to heparan sulfate moieties of the host cell surface proteoglycans. Involved in fusion of viral and cellular membranes leading to virus entry into the host cell: following initial binding to its host cell entry receptors, membrane fusion is mediated by the fusion machinery composed at least of gB and the heterodimer gH/gL. May be involved in the fusion between the virion envelope and the outer nuclear membrane during virion egress. Also plays a role, together with gK, in virus-induced cell-to-cell fusion (syncytia formation). The protein is Envelope glycoprotein B of Human herpesvirus 1 (strain KOS) (HHV-1).